The primary structure comprises 255 residues: Small ribosomal subunit protein uS2 (255 aa).

It belongs to the universal ribosomal protein uS2 family.

The polypeptide is Small ribosomal subunit protein uS2 (Streptococcus pyogenes serotype M28 (strain MGAS6180)).